The primary structure comprises 439 residues: 26S proteasome regulatory subunit 6A (439 aa).

Position 1 is an N-acetylmethionine (methionine 1). A Phosphoserine modification is found at serine 9. 227–234 (GPPGTGKT) lines the ATP pocket. Serine 376 carries the post-translational modification Phosphoserine.

It belongs to the AAA ATPase family. In terms of assembly, component of the 19S proteasome regulatory particle complex. The 26S proteasome consists of a 20S core particle (CP) and two 19S regulatory subunits (RP). The regulatory particle is made of a lid composed of 9 subunits, a base containing 6 ATPases including PSMC3 and few additional components. Interacts with PAAF1.

The protein localises to the cytoplasm. It localises to the nucleus. Its function is as follows. Component of the 26S proteasome, a multiprotein complex involved in the ATP-dependent degradation of ubiquitinated proteins. This complex plays a key role in the maintenance of protein homeostasis by removing misfolded or damaged proteins, which could impair cellular functions, and by removing proteins whose functions are no longer required. Therefore, the proteasome participates in numerous cellular processes, including cell cycle progression, apoptosis, or DNA damage repair. PSMC3 belongs to the heterohexameric ring of AAA (ATPases associated with diverse cellular activities) proteins that unfolds ubiquitinated target proteins that are concurrently translocated into a proteolytic chamber and degraded into peptides. The sequence is that of 26S proteasome regulatory subunit 6A (Psmc3) from Rattus norvegicus (Rat).